We begin with the raw amino-acid sequence, 155 residues long: uncharacterized protein (155 aa).

The Macro domain maps to 1–155 (MIVKYIKGDI…IVIVDWEPLL (155 aa)).

This is an uncharacterized protein from Escherichia coli (Bacteriophage T4).